The following is a 1287-amino-acid chain: DENN domain-containing protein 5A (1287 aa).

A uDENN domain is found at 57–259; the sequence is STTEGENFEQ…EVPLPPPGRS (203 aa). Serine 193 bears the Phosphoserine mark. One can recognise a cDENN domain in the interval 278 to 414; it reads ELPLFDFPVK…LEFVQEVSEI (137 aa). Residues 416–598 form the dDENN domain; that stretch reads MAFGVPPEGN…IMCHDDDDKD (183 aa). Positions 787–950 constitute an RUN 1 domain; that stretch reads VEENTLIASL…DYFCFTNVFT (164 aa). In terms of domain architecture, PLAT spans 954–1062; the sequence is IPYHILIVPS…DDGSLERVLV (109 aa). A Phosphothreonine modification is found at threonine 1079. Phosphoserine is present on residues serine 1085, serine 1087, and serine 1096. In terms of domain architecture, RUN 2 spans 1134–1280; sequence TLLLCGECGL…QEFNITLDTS (147 aa).

This sequence belongs to the RAB6IP1 family. Interacts with RAB6A bound to GTP. In terms of tissue distribution, expressed in developing brain and developing neurons.

It is found in the golgi apparatus membrane. Functionally, guanine nucleotide exchange factor (GEF) which may activate RAB6A and RAB39A and/or RAB39B. Promotes the exchange of GDP to GTP, converting inactive GDP-bound Rab proteins into their active GTP-bound form. Involved in the negative regulation of neurite outgrowth. The polypeptide is DENN domain-containing protein 5A (Dennd5a) (Rattus norvegicus (Rat)).